We begin with the raw amino-acid sequence, 948 residues long: Protein translocase subunit SecA (948 aa).

ATP-binding positions include glutamine 91, 109–113, and aspartate 509; that span reads GEGKT.

Belongs to the SecA family. As to quaternary structure, monomer and homodimer. Part of the essential Sec protein translocation apparatus which comprises SecA, SecYEG and auxiliary proteins SecDF. Other proteins may also be involved.

It is found in the cell inner membrane. Its subcellular location is the cellular thylakoid membrane. It localises to the cytoplasm. It carries out the reaction ATP + H2O + cellular proteinSide 1 = ADP + phosphate + cellular proteinSide 2.. In terms of biological role, part of the Sec protein translocase complex. Interacts with the SecYEG preprotein conducting channel. Has a central role in coupling the hydrolysis of ATP to the transfer of proteins into and across the cell membrane, serving as an ATP-driven molecular motor driving the stepwise translocation of polypeptide chains across the membrane. Its function is as follows. Probably participates in protein translocation into and across both the cytoplasmic and thylakoid membranes in cyanobacterial cells. This is Protein translocase subunit SecA from Synechococcus elongatus (strain ATCC 33912 / PCC 7942 / FACHB-805) (Anacystis nidulans R2).